The chain runs to 579 residues: Proteasome-associated ATPase (579 aa).

Residues 1–21 (MPRDETPEREHAEQQSRQALE) are disordered. A coiled-coil region spans residues 8–86 (EREHAEQQSR…REEVEKLTQP (79 aa)). An ATP-binding site is contributed by 268–273 (GCGKTL). The segment at 578 to 579 (YL) is docks into pockets in the proteasome alpha-ring.

The protein belongs to the AAA ATPase family. As to quaternary structure, homohexamer. Assembles into a hexameric ring structure that caps the 20S proteasome core. Strongly interacts with the prokaryotic ubiquitin-like protein Pup through a hydrophobic interface; the interacting region of ARC lies in its N-terminal coiled-coil domain. There is one Pup binding site per ARC hexamer ring. Upon ATP-binding, the C-terminus of ARC interacts with the alpha-rings of the proteasome core, possibly by binding to the intersubunit pockets.

The protein operates within protein degradation; proteasomal Pup-dependent pathway. Its function is as follows. ATPase which is responsible for recognizing, binding, unfolding and translocation of pupylated proteins into the bacterial 20S proteasome core particle. May be essential for opening the gate of the 20S proteasome via an interaction with its C-terminus, thereby allowing substrate entry and access to the site of proteolysis. Thus, the C-termini of the proteasomal ATPase may function like a 'key in a lock' to induce gate opening and therefore regulate proteolysis. The chain is Proteasome-associated ATPase from Acidimicrobium ferrooxidans (strain DSM 10331 / JCM 15462 / NBRC 103882 / ICP).